The primary structure comprises 1042 residues: Protein phosphatase Slingshot homolog 1 (1042 aa).

Over residues methionine 1–proline 12 the composition is skewed to polar residues. The interval methionine 1–aspartate 29 is disordered. The residue at position 2 (alanine 2) is an N-acetylalanine. Positions serine 13 to serine 22 are enriched in low complexity. Residues serine 37 and serine 57 each carry the phosphoserine modification. Residues glutamate 249 to glycine 304 form the DEK-C domain. The Tyrosine-protein phosphatase domain maps to lysine 308 to alanine 449. Cysteine 393 serves as the catalytic Phosphocysteine intermediate. Residue serine 516 is modified to Phosphoserine. Disordered regions lie at residues phenylalanine 576 to glutamine 609, methionine 668 to aspartate 766, isoleucine 858 to threonine 900, and proline 915 to leucine 942. Positions serine 675 to proline 693 are enriched in polar residues. The span at alanine 697–alanine 712 shows a compositional bias: low complexity. Polar residues predominate over residues leucine 886–threonine 900. Serine 889 carries the post-translational modification Phosphoserine. The interval serine 889–serine 1042 is interaction with YWHAG. The segment covering serine 917–serine 935 has biased composition (low complexity). A Phosphoserine modification is found at serine 970. A compositionally biased stretch (polar residues) spans serine 985–aspartate 995. A disordered region spans residues serine 985–serine 1042.

The protein belongs to the protein-tyrosine phosphatase family. Interacts with the 14-3-3 proteins YWHAB, YWHAG, YWHAQ, and YWHAZ. Interaction with 14-3-3 proteins inhibits phosphatase activity and also blocks recruitment to lamellipodia and stimulation by actin. Interacts with actin and this stimulates phosphatase activity. Interacts with LIMK1. Phosphorylated. Inhibitory phosphorylation by PAK4 promotes binding to YWHAZ. Phosphorylation at Ser-970 is decreased by stimuli which promote actin reorganization and lamellipodia formation. Can be dephosphorylated and activated by PPP3CA/calcineurin A. Phosphorylation decreases immediately prior to telophase. In terms of tissue distribution, expressed in brain, heart, kidney and thymus. Also expressed at lower levels in liver, skeletal muscle, small intestine and spleen.

The protein localises to the cytoplasm. The protein resides in the cytoskeleton. It localises to the cleavage furrow. Its subcellular location is the midbody. It carries out the reaction O-phospho-L-tyrosyl-[protein] + H2O = L-tyrosyl-[protein] + phosphate. The catalysed reaction is O-phospho-L-seryl-[protein] + H2O = L-seryl-[protein] + phosphate. The enzyme catalyses O-phospho-L-threonyl-[protein] + H2O = L-threonyl-[protein] + phosphate. Functionally, protein phosphatase which regulates actin filament dynamics. Dephosphorylates and activates the actin binding/depolymerizing factor cofilin, which subsequently binds to actin filaments and stimulates their disassembly. Inhibitory phosphorylation of cofilin is mediated by LIMK1, which may also be dephosphorylated and inactivated by this protein. The sequence is that of Protein phosphatase Slingshot homolog 1 from Mus musculus (Mouse).